The sequence spans 147 residues: Ribonuclease H (147 aa).

In terms of domain architecture, RNase H type-1 spans 5 to 141 (ARKQITLYSD…CDELARNEAE (137 aa)). Mg(2+) contacts are provided by D14, E52, D74, and D133.

The protein belongs to the RNase H family. Monomer. Mg(2+) serves as cofactor.

Its subcellular location is the cytoplasm. The enzyme catalyses Endonucleolytic cleavage to 5'-phosphomonoester.. Its function is as follows. Endonuclease that specifically degrades the RNA of RNA-DNA hybrids. This Sulfurovum sp. (strain NBC37-1) protein is Ribonuclease H.